The primary structure comprises 241 residues: ATP synthase subunit a (241 aa).

5 helical membrane-spanning segments follow: residues 30-50 (GQVFLTSWILLGALLVFISLG), 91-111 (FIGTLFLFVFVSNWGGALIPW), 128-148 (INTTIALALLVSLSYFYAGLS), 193-213 (LVVGVLVFLVPLILPIPVMFL), and 214-234 (GLFTSAIQALIFATLAAYYIG).

It belongs to the ATPase A chain family. As to quaternary structure, F-type ATPases have 2 components, CF(1) - the catalytic core - and CF(0) - the membrane proton channel. CF(1) has five subunits: alpha(3), beta(3), gamma(1), delta(1), epsilon(1). CF(0) has four main subunits: a, b, b' and c.

The protein resides in the cellular thylakoid membrane. Key component of the proton channel; it plays a direct role in the translocation of protons across the membrane. The sequence is that of ATP synthase subunit a from Prochlorococcus marinus (strain MIT 9312).